A 291-amino-acid polypeptide reads, in one-letter code: START domain-containing protein 10 (291 aa).

M1 bears the N-acetylmethionine mark. The tract at residues 1–20 is disordered; sequence MEKLAASTEPQGPRPVLGRE. Residues 14–224 enclose the START domain; it reads RPVLGRESVQ…MYKACLKYPE (211 aa). K94, K197, and K202 each carry N6-succinyllysine. S253 and S259 each carry phosphoserine. The tract at residues 260 to 291 is disordered; the sequence is LENIDESAVAESREERMGGAGGEGSDDDTSLT. S284 carries the post-translational modification Phosphoserine; by CK2. S289 is subject to Phosphoserine.

In terms of processing, phosphorylation at Ser-284 by CK2 negatively regulates lipid transfer activity, possibly by decreasing membrane association.

The protein resides in the cell projection. It localises to the cilium. It is found in the flagellum. Its subcellular location is the cytoplasm. The protein localises to the membrane. In terms of biological role, may play metabolic roles in sperm maturation or fertilization. Phospholipid transfer protein that preferentially selects lipid species containing a palmitoyl or stearoyl chain on the sn-1 and an unsaturated fatty acyl chain (18:1 or 18:2) on the sn-2 position. Able to transfer phosphatidylcholine (PC) and phosphatidyetanolamline (PE) between membranes. This is START domain-containing protein 10 (STARD10) from Homo sapiens (Human).